A 396-amino-acid chain; its full sequence is NADH-quinone oxidoreductase subunit D (396 aa).

This sequence belongs to the complex I 49 kDa subunit family. In terms of assembly, NDH-1 is composed of 14 different subunits. Subunits NuoB, C, D, E, F, and G constitute the peripheral sector of the complex.

The protein localises to the cell inner membrane. It catalyses the reaction a quinone + NADH + 5 H(+)(in) = a quinol + NAD(+) + 4 H(+)(out). In terms of biological role, NDH-1 shuttles electrons from NADH, via FMN and iron-sulfur (Fe-S) centers, to quinones in the respiratory chain. The immediate electron acceptor for the enzyme in this species is believed to be ubiquinone. Couples the redox reaction to proton translocation (for every two electrons transferred, four hydrogen ions are translocated across the cytoplasmic membrane), and thus conserves the redox energy in a proton gradient. The polypeptide is NADH-quinone oxidoreductase subunit D (Methylorubrum extorquens (strain PA1) (Methylobacterium extorquens)).